We begin with the raw amino-acid sequence, 168 residues long: Zinc finger A20 and AN1 domain-containing stress-associated protein 1 (168 aa).

The A20-type zinc-finger motif lies at 13 to 47 (PSEPKLCVKGCGFFGSPSNMNLCSKCYRDIRATEE). The Zn(2+) site is built by C19, C23, C35, and C38. Residues 49–105 (TASAKAAVEKSLNPNKPKTQPQQSQEITQGVLGSGSSSSSTRGGDSAAAPLDPPKST) form a disordered region. Residues 60–76 (LNPNKPKTQPQQSQEIT) show a composition bias toward polar residues. The span at 82 to 94 (SGSSSSSTRGGDS) shows a compositional bias: low complexity. The AN1-type zinc-finger motif lies at 103–149 (KSTATRCLSCNKKVGVTGFKCRCGSTFCGTHRYPESHECQFDFKGVA). Zn(2+)-binding residues include C109, C112, C123, C125, C130, H133, H139, and C141.

Its function is as follows. May be involved in environmental stress response. In Arabidopsis thaliana (Mouse-ear cress), this protein is Zinc finger A20 and AN1 domain-containing stress-associated protein 1 (SAP1).